A 575-amino-acid polypeptide reads, in one-letter code: Alpha-(1,6)-fucosyltransferase (575 aa).

At 1–9 (MRPWTGSWR) the chain is on the cytoplasmic side. The chain crosses the membrane as a helical; Signal-anchor for type II membrane protein span at residues 10–30 (WIMLILFAWGTLLFYIGGHLV). Topologically, residues 31-575 (RDNDHPDHSS…KYPTYPEAEK (545 aa)) are lumenal. Intrachain disulfides connect Cys-204/Cys-266, Cys-212/Cys-230, and Cys-218/Cys-222. The region spanning 206 to 493 (KAKKLVCNIN…PDASANFHSL (288 aa)) is the GT23 domain. Ser-278 is subject to Phosphoserine. Residues 299–305 (PRPPYLP) carry the SH3-binding motif. The important for donor substrate binding stretch occupies residues 365 to 366 (RR). A disulfide bond links Cys-465 and Cys-472. The region spanning 502-563 (QNAHNQIAIY…PSYKVREKIE (62 aa)) is the SH3 domain.

This sequence belongs to the glycosyltransferase 23 family. In terms of processing, tyrosine phosphorylated by PKDCC/VLK.

Its subcellular location is the golgi apparatus. The protein resides in the golgi stack membrane. The catalysed reaction is N(4)-{beta-D-GlcNAc-(1-&gt;2)-alpha-D-Man-(1-&gt;3)-[beta-D-GlcNAc-(1-&gt;2)-alpha-D-Man-(1-&gt;6)]-beta-D-Man-(1-&gt;4)-beta-D-GlcNAc-(1-&gt;4)-beta-D-GlcNAc}-L-asparaginyl-[protein] + GDP-beta-L-fucose = an N(4)-{beta-D-GlcNAc-(1-&gt;2)-alpha-D-Man-(1-&gt;3)-[beta-D-GlcNAc-(1-&gt;2)-alpha-D-Man-(1-&gt;6)]-beta-D-Man-(1-&gt;4)-beta-D-GlcNAc-(1-&gt;4)-[alpha-L-Fuc-(1-&gt;6)]-beta-D-GlcNAc}-L-asparaginyl-[protein] + GDP + H(+). It functions in the pathway protein modification; protein glycosylation. Catalyzes the addition of fucose in alpha 1-6 linkage to the first GlcNAc residue, next to the peptide chains in N-glycans. The protein is Alpha-(1,6)-fucosyltransferase (FUT8) of Homo sapiens (Human).